We begin with the raw amino-acid sequence, 299 residues long: Protease HtpX homolog (299 aa).

Transmembrane regions (helical) follow at residues 14-34 (ILVM…VGYL) and 39-59 (ATGG…IMVG). Histidine 144 serves as a coordination point for Zn(2+). Residue glutamate 145 is part of the active site. Residue histidine 148 participates in Zn(2+) binding. 2 helical membrane passes run 159–179 (IALA…NFMW) and 196–216 (VFAI…ATMV). Glutamate 225 serves as a coordination point for Zn(2+).

This sequence belongs to the peptidase M48B family. The cofactor is Zn(2+).

It is found in the cell membrane. This chain is Protease HtpX homolog, found in Limosilactobacillus fermentum (strain NBRC 3956 / LMG 18251) (Lactobacillus fermentum).